We begin with the raw amino-acid sequence, 962 residues long: Glutamate receptor 1 (962 aa).

The first 25 residues, 1 to 25 (MFSSFSFLNMFGVLFTVFNLTVVQP), serve as a signal peptide directing secretion. Topologically, residues 26 to 591 (YPSHIIIKSF…SVFSFMQPLS (566 aa)) are extracellular. Residues N190, N220, N275, N333, N441, and N482 are each glycosylated (N-linked (GlcNAc...) asparagine). The helical transmembrane segment at 592–612 (TEIWMYIIFAYIGVSVVIFLV) threads the bilayer. Over 613–668 (SRFSPYEWRVEETSRGGFTISNDFSVYNCLWFTLAAFMQQGTDILPRSISGRIASS) the chain is Cytoplasmic. A helical membrane pass occupies residues 669 to 689 (AWWFFTMIIVSSYTANLAAFL). At 690-855 (TLEKMQAPIE…GSSASLNLSK (166 aa)) the chain is on the extracellular side. N852 carries N-linked (GlcNAc...) asparagine glycosylation. Residues 856-876 (VAGIFYILMGGMVISMLAALG) traverse the membrane as a helical segment. Over 877–962 (EFLYRSRIEA…PANTLYNTAV (86 aa)) the chain is Cytoplasmic.

Belongs to the glutamate-gated ion channel (TC 1.A.10.1) family. In terms of assembly, interacts with sol-1. Interacts with cni-1; the interaction negatively regulates export of glr-1 from the endoplasmic reticulum to synapses. Interacts with usp-46; the interaction results in deubiquitination of glr-1. Ubiquitinated. Deubiquitinated by usp-46 which prevents its degradation. In terms of processing, glycosylated. Command interneurons of the locomotory control circuit (AIB, AVA, AVB, AVD, AVE and PVC) and motor neurons (RMD, RIM, SMD, AVG, PVQ and URY).

The protein resides in the postsynaptic cell membrane. It localises to the endoplasmic reticulum. The protein localises to the synapse. It is found in the cell membrane. Its subcellular location is the recycling endosome. The protein resides in the cell projection. It localises to the dendrite. The protein localises to the perikaryon. In terms of biological role, non-NMDA (N-methyl-D-aspartate) ionotropic glutamate receptor. L-glutamate acts as an excitatory neurotransmitter at many synapses in the central nervous system. The postsynaptic actions of glutamate are mediated by a variety of receptors that are named according to their selective agonists. May contribute to a sensory discrimination between mechanical and chemical stimuli. Plays a role in controlling movement in response to environmental cues such as food availability and mechanosensory stimulation such as the nose touch response. In AIB interneurons, promotes omega turns, a movement that frequently follows backwards locomotion or 'reversals' in response to environmental cues while possibly playing an inhibitory role in alternative neurons to inhibit omega turns. The polypeptide is Glutamate receptor 1 (Caenorhabditis elegans).